We begin with the raw amino-acid sequence, 284 residues long: Homeobox-leucine zipper protein HAT4 (284 aa).

Residues 48-59 (ESFTSSVPNSDS) are compositionally biased toward polar residues. Residues 48–132 (ESFTSSVPNS…DGDNSRKKLR (85 aa)) form a disordered region. Low complexity predominate over residues 89 to 100 (VSSPNSTVSSST). The segment at residues 126 to 185 (NSRKKLRLSKDQSAILEETFKDHSTLNPKQKQALAKQLGLRARQVEVWFQNRRARTKLKQ) is a DNA-binding region (homeobox). The segment at 193–214 (LRRCCENLTEENRRLQKEVTEL) is leucine-zipper.

It belongs to the HD-ZIP homeobox family. Class II subfamily. As to quaternary structure, interacts with DNA as homodimer. As to expression, predominantly expressed in leaves and stems.

Its subcellular location is the nucleus. Probable transcription factor involved in the negative regulation of cell elongation and specific cell proliferation processes such as lateral root formation and secondary growth of the vascular system. Acts as a mediator of the red/far-red light effects on leaf cell expansion in the shading response. Binds to the DNA sequence 5'-CAAT[GC]ATTG-3'. Negatively regulates its own expression. This Arabidopsis thaliana (Mouse-ear cress) protein is Homeobox-leucine zipper protein HAT4 (HAT4).